We begin with the raw amino-acid sequence, 542 residues long: CTP synthase (542 aa).

The tract at residues 1-265 (MARYVFITGG…DSEVLAAFGI (265 aa)) is amidoligase domain. Serine 13 is a CTP binding site. Serine 13 serves as a coordination point for UTP. ATP is bound by residues 14 to 19 (SLGKGI) and aspartate 71. Residues aspartate 71 and glutamate 139 each coordinate Mg(2+). Residues 146–148 (DIE), 186–191 (KTKPTQ), and lysine 222 contribute to the CTP site. Residues 186–191 (KTKPTQ) and lysine 222 each bind UTP. The 251-residue stretch at 291–541 (TIAIVGKYTG…VEAAVEQSRL (251 aa)) folds into the Glutamine amidotransferase type-1 domain. L-glutamine is bound at residue glycine 353. Cysteine 380 acts as the Nucleophile; for glutamine hydrolysis in catalysis. L-glutamine is bound by residues 381–384 (FGMQ), glutamate 404, and arginine 469. Catalysis depends on residues histidine 514 and glutamate 516.

The protein belongs to the CTP synthase family. In terms of assembly, homotetramer.

The enzyme catalyses UTP + L-glutamine + ATP + H2O = CTP + L-glutamate + ADP + phosphate + 2 H(+). The catalysed reaction is L-glutamine + H2O = L-glutamate + NH4(+). It carries out the reaction UTP + NH4(+) + ATP = CTP + ADP + phosphate + 2 H(+). Its pathway is pyrimidine metabolism; CTP biosynthesis via de novo pathway; CTP from UDP: step 2/2. Its activity is regulated as follows. Allosterically activated by GTP, when glutamine is the substrate; GTP has no effect on the reaction when ammonia is the substrate. The allosteric effector GTP functions by stabilizing the protein conformation that binds the tetrahedral intermediate(s) formed during glutamine hydrolysis. Inhibited by the product CTP, via allosteric rather than competitive inhibition. Functionally, catalyzes the ATP-dependent amination of UTP to CTP with either L-glutamine or ammonia as the source of nitrogen. Regulates intracellular CTP levels through interactions with the four ribonucleotide triphosphates. The chain is CTP synthase from Agrobacterium fabrum (strain C58 / ATCC 33970) (Agrobacterium tumefaciens (strain C58)).